Reading from the N-terminus, the 209-residue chain is Outer-membrane lipoprotein carrier protein (209 aa).

The signal sequence occupies residues 1–21 (MHRQLRYAVLATALFASTAFA).

The protein belongs to the LolA family. In terms of assembly, monomer.

The protein localises to the periplasm. Functionally, participates in the translocation of lipoproteins from the inner membrane to the outer membrane. Only forms a complex with a lipoprotein if the residue after the N-terminal Cys is not an aspartate (The Asp acts as a targeting signal to indicate that the lipoprotein should stay in the inner membrane). The protein is Outer-membrane lipoprotein carrier protein of Xanthomonas axonopodis pv. citri (strain 306).